The primary structure comprises 158 residues: Transcription elongation factor GreA (158 aa).

A disordered region spans residues 41–61 (GDLSENAEYHAAKEDQSHNEG). A coiled-coil region spans residues 51-74 (AAKEDQSHNEGRIAELEDKLARAE).

Belongs to the GreA/GreB family.

In terms of biological role, necessary for efficient RNA polymerase transcription elongation past template-encoded arresting sites. The arresting sites in DNA have the property of trapping a certain fraction of elongating RNA polymerases that pass through, resulting in locked ternary complexes. Cleavage of the nascent transcript by cleavage factors such as GreA or GreB allows the resumption of elongation from the new 3'terminus. GreA releases sequences of 2 to 3 nucleotides. This chain is Transcription elongation factor GreA, found in Nitrobacter hamburgensis (strain DSM 10229 / NCIMB 13809 / X14).